The following is a 398-amino-acid chain: Phosphomevalonate dehydratase large subunit (398 aa).

Gly-48, Val-49, Ser-50, Asn-76, and Pro-77 together coordinate (R)-5-phosphomevalonate. Cys-116 contributes to the [4Fe-4S] cluster binding site. Glu-136 and Ser-137 together coordinate (R)-5-phosphomevalonate. [4Fe-4S] cluster contacts are provided by Cys-287 and Cys-342. Lys-361 provides a ligand contact to (R)-5-phosphomevalonate.

It belongs to the AcnX type II large subunit family. As to quaternary structure, heterodimer composed of a large subunit (PMDh-L) and a small subunit (PMDh-S). [4Fe-4S] cluster is required as a cofactor.

It catalyses the reaction (R)-5-phosphomevalonate = (2E)-3-methyl-5-phosphooxypent-2-enoate + H2O. It functions in the pathway isoprenoid biosynthesis; isopentenyl diphosphate biosynthesis via mevalonate pathway. In terms of biological role, component of a hydro-lyase that catalyzes the dehydration of mevalonate 5-phosphate (MVA5P) to form trans-anhydromevalonate 5-phosphate (tAHMP). Involved in the archaeal mevalonate (MVA) pathway, which provides fundamental precursors for isoprenoid biosynthesis, such as isopentenyl diphosphate (IPP) and dimethylallyl diphosphate (DMAPP). The polypeptide is Phosphomevalonate dehydratase large subunit (Methanosarcina mazei (strain ATCC BAA-159 / DSM 3647 / Goe1 / Go1 / JCM 11833 / OCM 88) (Methanosarcina frisia)).